The primary structure comprises 318 residues: Putative HTH-type transcriptional regulatory protein TK0539 (318 aa).

One can recognise an HTH cro/C1-type domain in the interval 131-189 (LRELREKHGYSVNELAQLLGVSRKSLLNYERGEQAVSLDVAIQLEEIFDEALAEPIDIL). The H-T-H motif DNA-binding region spans 142-161 (VNELAQLLGVSRKSLLNYER).

This Thermococcus kodakarensis (strain ATCC BAA-918 / JCM 12380 / KOD1) (Pyrococcus kodakaraensis (strain KOD1)) protein is Putative HTH-type transcriptional regulatory protein TK0539.